Consider the following 355-residue polypeptide: DNA polymerase IV (355 aa).

Positions Ile-7–Gly-188 constitute a UmuC domain. 2 residues coordinate Mg(2+): Asp-11 and Asp-106. Glu-107 is an active-site residue.

This sequence belongs to the DNA polymerase type-Y family. In terms of assembly, monomer. It depends on Mg(2+) as a cofactor.

The protein resides in the cytoplasm. It carries out the reaction DNA(n) + a 2'-deoxyribonucleoside 5'-triphosphate = DNA(n+1) + diphosphate. Poorly processive, error-prone DNA polymerase involved in untargeted mutagenesis. Copies undamaged DNA at stalled replication forks, which arise in vivo from mismatched or misaligned primer ends. These misaligned primers can be extended by PolIV. Exhibits no 3'-5' exonuclease (proofreading) activity. May be involved in translesional synthesis, in conjunction with the beta clamp from PolIII. This Legionella pneumophila (strain Corby) protein is DNA polymerase IV.